Consider the following 341-residue polypeptide: L-threonine 3-dehydrogenase (341 aa).

Cys38 serves as a coordination point for Zn(2+). Catalysis depends on charge relay system residues Thr40 and His43. The Zn(2+) site is built by His63, Glu64, Cys93, Cys96, Cys99, and Cys107. NAD(+) is bound by residues Ile175, Asp195, Arg200, 262 to 264, and 286 to 287; these read LGI and IY.

Belongs to the zinc-containing alcohol dehydrogenase family. In terms of assembly, homotetramer. Zn(2+) is required as a cofactor.

It localises to the cytoplasm. It catalyses the reaction L-threonine + NAD(+) = (2S)-2-amino-3-oxobutanoate + NADH + H(+). Its pathway is amino-acid degradation; L-threonine degradation via oxydo-reductase pathway; glycine from L-threonine: step 1/2. Functionally, catalyzes the NAD(+)-dependent oxidation of L-threonine to 2-amino-3-ketobutyrate. The polypeptide is L-threonine 3-dehydrogenase (Shewanella putrefaciens (strain CN-32 / ATCC BAA-453)).